A 249-amino-acid polypeptide reads, in one-letter code: Probable transcriptional regulatory protein LBL_2537 (249 aa).

It belongs to the TACO1 family.

It localises to the cytoplasm. This is Probable transcriptional regulatory protein LBL_2537 from Leptospira borgpetersenii serovar Hardjo-bovis (strain L550).